The chain runs to 119 residues: Protein TusC (119 aa).

It belongs to the DsrF/TusC family. In terms of assembly, heterohexamer, formed by a dimer of trimers. The hexameric TusBCD complex contains 2 copies each of TusB, TusC and TusD. The TusBCD complex interacts with TusE.

Its subcellular location is the cytoplasm. Its function is as follows. Part of a sulfur-relay system required for 2-thiolation of 5-methylaminomethyl-2-thiouridine (mnm(5)s(2)U) at tRNA wobble positions. The protein is Protein TusC of Buchnera aphidicola subsp. Baizongia pistaciae (strain Bp).